We begin with the raw amino-acid sequence, 644 residues long: Magnetosome protein MamZ (644 aa).

Residues 1–427 are major facilitator domain; sequence MPRNAEAPAK…YAAWLLANGI (427 aa). 18 helical membrane-spanning segments follow: residues 22–42, 63–83, 92–112, 113–133, 159–179, 185–205, 254–274, 281–301, 311–331, 337–357, 369–389, 403–423, 440–460, 478–498, 518–538, 553–573, 588–608, and 612–629; these read WNIIYLLMTVGALMAALSISI, ADIQVVAEIVSIVCVGWFGLL, IIALGFLIAVVGAAVSLLSLQ, VGLAFGAAGLVLFYLTRVLLT, LMGNLVFMMVFGGTMLAAIVM, PGGVFLIMCLPLLAGIAGFQL, VIILSLFFSLWCISVSDLVGV, AHAAVMIGLLGLAVLAAVPLW, ISAIGASLSLAALGYIWLGMF, WLVALPLLMVGIGHAGCFVTL, ILGAMVGAGYLVGGLGTVMLV, APFILMGTGKMLVTLYAAWLL, TVDWKPLVFLTAALPFVWLVG, VGFVNRYLGDWAFTFLIISLA, IGLFAFFYAVMHVLAYVALEW, PFILLGLVAFALLIPLAFTSA, LHSATYVINALVALHFILAAN, and GEPYVYAAAVIVLLWYRF. The segment at 488–599 is ferric reductase-like domain; it reads WAFTFLIISL…SATYVINALV (112 aa).

The protein in the N-terminal section; belongs to the major facilitator superfamily.

Its subcellular location is the magnetosome membrane. Its function is as follows. Required for correct biomineralization of the magnetosome; probably converts and then transports some form of iron. It is partially functionally redundant with MamH. May function with MamX, MamY amd Mms6. The polypeptide is Magnetosome protein MamZ (Paramagnetospirillum magneticum (strain ATCC 700264 / AMB-1) (Magnetospirillum magneticum)).